The chain runs to 119 residues: ATP-dependent Clp protease adapter protein ClpS (119 aa).

The tract at residues 1–29 (MICPPGENKSMAERKQGGQGNGVGSSVVT) is disordered.

The protein belongs to the ClpS family. As to quaternary structure, binds to the N-terminal domain of the chaperone ClpA.

Functionally, involved in the modulation of the specificity of the ClpAP-mediated ATP-dependent protein degradation. The chain is ATP-dependent Clp protease adapter protein ClpS from Caulobacter vibrioides (strain ATCC 19089 / CIP 103742 / CB 15) (Caulobacter crescentus).